The sequence spans 496 residues: Aldehyde dehydrogenase (496 aa).

Residues Glu-263 and Cys-296 contribute to the active site.

Belongs to the aldehyde dehydrogenase family.

Its subcellular location is the cytoplasm. It carries out the reaction an aldehyde + NAD(+) + H2O = a carboxylate + NADH + 2 H(+). This Davidiella tassiana (Mycosphaerella tassiana) protein is Aldehyde dehydrogenase (CLAH10).